A 564-amino-acid polypeptide reads, in one-letter code: NAD-dependent malic enzyme (564 aa).

The active-site Proton donor is Y102. R155 serves as a coordination point for NAD(+). The active-site Proton acceptor is K173. A divalent metal cation contacts are provided by E244, D245, and D268. Residues D268 and N417 each contribute to the NAD(+) site.

The protein belongs to the malic enzymes family. In terms of assembly, homotetramer. The cofactor is Mg(2+). Mn(2+) serves as cofactor.

It catalyses the reaction (S)-malate + NAD(+) = pyruvate + CO2 + NADH. It carries out the reaction oxaloacetate + H(+) = pyruvate + CO2. The polypeptide is NAD-dependent malic enzyme (Pseudomonas aeruginosa (strain UCBPP-PA14)).